A 375-amino-acid polypeptide reads, in one-letter code: Aminomethyltransferase (375 aa).

Belongs to the GcvT family. As to quaternary structure, the glycine cleavage system is composed of four proteins: P, T, L and H.

It carries out the reaction N(6)-[(R)-S(8)-aminomethyldihydrolipoyl]-L-lysyl-[protein] + (6S)-5,6,7,8-tetrahydrofolate = N(6)-[(R)-dihydrolipoyl]-L-lysyl-[protein] + (6R)-5,10-methylene-5,6,7,8-tetrahydrofolate + NH4(+). Its function is as follows. The glycine cleavage system catalyzes the degradation of glycine. This Ralstonia pickettii (strain 12J) protein is Aminomethyltransferase.